We begin with the raw amino-acid sequence, 149 residues long: SsrA-binding protein (149 aa).

The protein belongs to the SmpB family.

The protein resides in the cytoplasm. Required for rescue of stalled ribosomes mediated by trans-translation. Binds to transfer-messenger RNA (tmRNA), required for stable association of tmRNA with ribosomes. tmRNA and SmpB together mimic tRNA shape, replacing the anticodon stem-loop with SmpB. tmRNA is encoded by the ssrA gene; the 2 termini fold to resemble tRNA(Ala) and it encodes a 'tag peptide', a short internal open reading frame. During trans-translation Ala-aminoacylated tmRNA acts like a tRNA, entering the A-site of stalled ribosomes, displacing the stalled mRNA. The ribosome then switches to translate the ORF on the tmRNA; the nascent peptide is terminated with the 'tag peptide' encoded by the tmRNA and targeted for degradation. The ribosome is freed to recommence translation, which seems to be the essential function of trans-translation. The chain is SsrA-binding protein from Fervidobacterium nodosum (strain ATCC 35602 / DSM 5306 / Rt17-B1).